Here is a 185-residue protein sequence, read N- to C-terminus: Ribosome-recycling factor (185 aa).

The protein belongs to the RRF family.

It localises to the cytoplasm. In terms of biological role, responsible for the release of ribosomes from messenger RNA at the termination of protein biosynthesis. May increase the efficiency of translation by recycling ribosomes from one round of translation to another. This is Ribosome-recycling factor from Legionella pneumophila (strain Paris).